The chain runs to 449 residues: uncharacterized protein (449 aa).

Residues 1-13 are compositionally biased toward basic residues; sequence MPKAPKTKLHHAP. Positions 1-125 are disordered; it reads MPKAPKTKLH…SQEEEEYEEL (125 aa). At S22 the chain carries Phosphoserine. A compositionally biased stretch (polar residues) spans 73-84; the sequence is KPSQISAFISNG. S156 is modified (phosphoserine).

The protein belongs to the bystin family.

This is an uncharacterized protein from Schizosaccharomyces pombe (strain 972 / ATCC 24843) (Fission yeast).